Consider the following 186-residue polypeptide: Archaemetzincin (186 aa).

A Zn(2+)-binding site is contributed by His136. Glu137 (proton acceptor) is an active-site residue. 6 residues coordinate Zn(2+): His140, His146, Cys147, Cys152, Cys171, and Cys174.

The protein belongs to the peptidase M54 family. Monomer. Zn(2+) serves as cofactor.

Probable zinc metalloprotease whose natural substrate is unknown. This Thermococcus kodakarensis (strain ATCC BAA-918 / JCM 12380 / KOD1) (Pyrococcus kodakaraensis (strain KOD1)) protein is Archaemetzincin.